The sequence spans 294 residues: Beta-glucoside kinase (294 aa).

5–11 (AFDIGGT) lines the ATP pocket.

It belongs to the ROK (NagC/XylR) family.

The enzyme catalyses D-cellobiose + ATP = 6-phospho-beta-D-glucosyl-(1-&gt;4)-D-glucose + ADP + H(+). Functionally, catalyzes the ATP-dependent phosphorylation of cellobiose to produce cellobiose-6'-P. May have a dual role of kinase and transcriptional regulator of the cellobiose-PTS operon. This is Beta-glucoside kinase (bglK) from Listeria monocytogenes serovar 1/2a (strain ATCC BAA-679 / EGD-e).